The chain runs to 255 residues: Tryptophan synthase alpha chain (255 aa).

Residues glutamate 49 and aspartate 60 each act as proton acceptor in the active site.

The protein belongs to the TrpA family. Tetramer of two alpha and two beta chains.

The catalysed reaction is (1S,2R)-1-C-(indol-3-yl)glycerol 3-phosphate + L-serine = D-glyceraldehyde 3-phosphate + L-tryptophan + H2O. It participates in amino-acid biosynthesis; L-tryptophan biosynthesis; L-tryptophan from chorismate: step 5/5. Its function is as follows. The alpha subunit is responsible for the aldol cleavage of indoleglycerol phosphate to indole and glyceraldehyde 3-phosphate. In Desulfovibrio desulfuricans (strain ATCC 27774 / DSM 6949 / MB), this protein is Tryptophan synthase alpha chain.